The primary structure comprises 151 residues: Neuroglobin (151 aa).

In terms of domain architecture, Globin spans 1 to 149 (MERPEPELIR…VVQAMSRGWD (149 aa)). The heme b site is built by His-64 and His-96.

It belongs to the globin family. Monomer. Homodimer and homotetramer; disulfide-linked. Mainly monomeric but also detected as part of homodimers and homotetramers. Interacts with 14-3-3 proteins; regulates the phosphorylation of NGB. Could interact (ferrous form) with G-alpha(i) proteins (GTP-bound form). In terms of processing, phosphorylated during hypoxia by ERK1/ERK2. Phosphorylation regulates the heme pocket hexacoordination preventing the association of His-64 with the heme metal center. Thereby, promotes the access of dioxygen and nitrite to the heme and stimulates the nitrite reductase activity. Phosphorylation during hypoxia is stabilized by 14-3-3 proteins.

It localises to the cytoplasm. The protein resides in the cytosol. The protein localises to the mitochondrion matrix. The catalysed reaction is Fe(III)-heme b-[protein] + nitric oxide + H2O = Fe(II)-heme b-[protein] + nitrite + 2 H(+). In terms of biological role, monomeric globin with a bis-histidyl six-coordinate heme-iron atom through which it can bind dioxygen, carbon monoxide and nitric oxide. Could help transport oxygen and increase its availability to the metabolically active neuronal tissues, though its low quantity in tissues as well as its high affinity for dioxygen, which may limit its oxygen-releasing ability, argue against it. The ferrous/deoxygenated form exhibits a nitrite reductase activity and it could produce nitric oxide which in turn inhibits cellular respiration in response to hypoxia. In its ferrous/deoxygenated state, it may also exhibit GDI (Guanine nucleotide Dissociation Inhibitor) activity toward heterotrimeric G-alpha proteins, thereby regulating signal transduction to facilitate neuroprotective responses in the wake of hypoxia and associated oxidative stress. In Canis lupus familiaris (Dog), this protein is Neuroglobin.